A 217-amino-acid chain; its full sequence is MNQTLLSEYGTSSERVEHAINALRDGKGVMVLDNEDRENEGDIIFAAETMTVEQMALTIRYGSGIVCLCLTEERRQQLQLPMMVENNSSPFQTAFTVTIEAAQGVTTGVSAADRITTIRAAIADNAKPSDLNRPGHVFPLRAQPGGVLVRQGHTEAAIDLVSLAGFKPAGVLCELTNDDGSMARTLEVVQFAKLHNMPVVTIEDLVIYRQAIEQKAS.

D-ribulose 5-phosphate contacts are provided by residues 37–38 (RE), aspartate 42, 150–154 (RQGHT), and glutamate 174. A Mg(2+)-binding site is contributed by glutamate 38. Histidine 153 serves as a coordination point for Mg(2+).

This sequence belongs to the DHBP synthase family. Homodimer. The cofactor is Mg(2+). Mn(2+) is required as a cofactor.

The enzyme catalyses D-ribulose 5-phosphate = (2S)-2-hydroxy-3-oxobutyl phosphate + formate + H(+). It participates in cofactor biosynthesis; riboflavin biosynthesis; 2-hydroxy-3-oxobutyl phosphate from D-ribulose 5-phosphate: step 1/1. Catalyzes the conversion of D-ribulose 5-phosphate to formate and 3,4-dihydroxy-2-butanone 4-phosphate. The protein is 3,4-dihydroxy-2-butanone 4-phosphate synthase of Photorhabdus laumondii subsp. laumondii (strain DSM 15139 / CIP 105565 / TT01) (Photorhabdus luminescens subsp. laumondii).